A 59-amino-acid polypeptide reads, in one-letter code: Large ribosomal subunit protein bL32 (59 aa).

It belongs to the bacterial ribosomal protein bL32 family.

This is Large ribosomal subunit protein bL32 from Thermodesulfovibrio yellowstonii (strain ATCC 51303 / DSM 11347 / YP87).